Consider the following 441-residue polypeptide: Tol-Pal system protein TolB (441 aa).

The first 39 residues, 1-39 (MPAMTPAFRRADLTGFLRTYGAALILLLAAMLAWQPAQA), serve as a signal peptide directing secretion.

Belongs to the TolB family. The Tol-Pal system is composed of five core proteins: the inner membrane proteins TolA, TolQ and TolR, the periplasmic protein TolB and the outer membrane protein Pal. They form a network linking the inner and outer membranes and the peptidoglycan layer.

It is found in the periplasm. Functionally, part of the Tol-Pal system, which plays a role in outer membrane invagination during cell division and is important for maintaining outer membrane integrity. This is Tol-Pal system protein TolB from Bordetella bronchiseptica (strain ATCC BAA-588 / NCTC 13252 / RB50) (Alcaligenes bronchisepticus).